A 362-amino-acid chain; its full sequence is Adenosine deaminase (362 aa).

Positions 19 and 21 each coordinate Zn(2+). 3 residues coordinate substrate: H21, D23, and G181. A Zn(2+)-binding site is contributed by H208. Residue E211 is the Proton donor of the active site. Residue D300 coordinates Zn(2+).

Belongs to the metallo-dependent hydrolases superfamily. Adenosine and AMP deaminases family. Adenosine deaminase subfamily. The cofactor is Zn(2+).

It catalyses the reaction adenosine + H2O + H(+) = inosine + NH4(+). The enzyme catalyses 2'-deoxyadenosine + H2O + H(+) = 2'-deoxyinosine + NH4(+). Functionally, catalyzes the hydrolytic deamination of adenosine and 2-deoxyadenosine. This is Adenosine deaminase from Mycobacterium leprae (strain TN).